Reading from the N-terminus, the 183-residue chain is UPF0302 protein BH3876 (183 aa).

It belongs to the UPF0302 family.

This is UPF0302 protein BH3876 from Halalkalibacterium halodurans (strain ATCC BAA-125 / DSM 18197 / FERM 7344 / JCM 9153 / C-125) (Bacillus halodurans).